The sequence spans 475 residues: Ribulose bisphosphate carboxylase large chain (475 aa).

Positions 1–2 (MS) are excised as a propeptide. N-acetylproline is present on P3. N6,N6,N6-trimethyllysine is present on K14. Substrate is bound by residues N123 and T173. K175 acts as the Proton acceptor in catalysis. A substrate-binding site is contributed by K177. Positions 201, 203, and 204 each coordinate Mg(2+). Position 201 is an N6-carboxylysine (K201). H294 (proton acceptor) is an active-site residue. R295, H327, and S379 together coordinate substrate.

The protein belongs to the RuBisCO large chain family. Type I subfamily. As to quaternary structure, heterohexadecamer of 8 large chains and 8 small chains; disulfide-linked. The disulfide link is formed within the large subunit homodimers. The cofactor is Mg(2+). Post-translationally, the disulfide bond which can form in the large chain dimeric partners within the hexadecamer appears to be associated with oxidative stress and protein turnover.

The protein resides in the plastid. The protein localises to the chloroplast. It catalyses the reaction 2 (2R)-3-phosphoglycerate + 2 H(+) = D-ribulose 1,5-bisphosphate + CO2 + H2O. The catalysed reaction is D-ribulose 1,5-bisphosphate + O2 = 2-phosphoglycolate + (2R)-3-phosphoglycerate + 2 H(+). Functionally, ruBisCO catalyzes two reactions: the carboxylation of D-ribulose 1,5-bisphosphate, the primary event in carbon dioxide fixation, as well as the oxidative fragmentation of the pentose substrate in the photorespiration process. Both reactions occur simultaneously and in competition at the same active site. The protein is Ribulose bisphosphate carboxylase large chain of Chloranthus spicatus (Chulantree).